Reading from the N-terminus, the 96-residue chain is Co-chaperonin GroES 1 (96 aa).

Belongs to the GroES chaperonin family. As to quaternary structure, heptamer of 7 subunits arranged in a ring. Interacts with the chaperonin GroEL.

It localises to the cytoplasm. Its function is as follows. Together with the chaperonin GroEL, plays an essential role in assisting protein folding. The GroEL-GroES system forms a nano-cage that allows encapsulation of the non-native substrate proteins and provides a physical environment optimized to promote and accelerate protein folding. GroES binds to the apical surface of the GroEL ring, thereby capping the opening of the GroEL channel. The sequence is that of Co-chaperonin GroES 1 from Vibrio vulnificus (strain CMCP6).